Here is a 73-residue protein sequence, read N- to C-terminus: UPF0154 protein MYCGA5700 (73 aa).

A helical membrane pass occupies residues 5–25 (LALGLSIPLCLIVGAFVGYFV).

Belongs to the UPF0154 family.

The protein resides in the membrane. The protein is UPF0154 protein MYCGA5700 of Mycoplasmoides gallisepticum (strain R(low / passage 15 / clone 2)) (Mycoplasma gallisepticum).